Reading from the N-terminus, the 462-residue chain is Jasmonoyl--L-amino acid synthetase GH3.3 (462 aa).

Ser103 contributes to the ATP binding site. Ser106 provides a ligand contact to jasmonate. ATP is bound by residues Thr126, Asn172, and 337-342 (GASEGW). 170-174 (TTNVY) lines the an L-alpha-amino acid pocket. Jasmonate-binding positions include 334–337 (AEYG) and Ser339.

It belongs to the IAA-amido conjugating enzyme family. In terms of tissue distribution, expressed in green shoots and flowers.

The catalysed reaction is a jasmonate + an L-alpha-amino acid + ATP = a jasmonyl-L-amino acid + AMP + diphosphate + H(+). Its function is as follows. Catalyzes the synthesis of jasmonate-amino acid conjugates by adenylation. Catalyzes the conjugation of jasmonate (JA) to Ile when expressed in a heterologous system (E.coli). Catalyzes in vitro the conjugation of jasmonate (JA) to Ile, Phe, Leu, Met, Val and Trp. May catalyze the synthesis of indole-3-acetic acid (IAA)-amino acid conjugates, providing a mechanism for the plant to cope with the presence of excess auxin. The chain is Jasmonoyl--L-amino acid synthetase GH3.3 from Oryza sativa subsp. japonica (Rice).